The chain runs to 277 residues: Probable endonuclease 4 (277 aa).

Histidine 67, histidine 107, glutamate 142, aspartate 176, histidine 179, histidine 211, aspartate 224, histidine 226, and glutamate 256 together coordinate Zn(2+).

It belongs to the AP endonuclease 2 family. Requires Zn(2+) as cofactor.

It carries out the reaction Endonucleolytic cleavage to 5'-phosphooligonucleotide end-products.. Its function is as follows. Endonuclease IV plays a role in DNA repair. It cleaves phosphodiester bonds at apurinic or apyrimidinic (AP) sites, generating a 3'-hydroxyl group and a 5'-terminal sugar phosphate. This is Probable endonuclease 4 from Akkermansia muciniphila (strain ATCC BAA-835 / DSM 22959 / JCM 33894 / BCRC 81048 / CCUG 64013 / CIP 107961 / Muc).